The chain runs to 123 residues: uncharacterized protein (123 aa).

The chain crosses the membrane as a helical span at residues 5 to 25 (GTLVIIFAIVLILCIMLLFFY). Residues 33 to 54 (PGVLPPPIPPPTPPPPKKKYDH) form a disordered region. Residues 35–47 (VLPPPIPPPTPPP) show a composition bias toward pro residues.

Belongs to the asfivirus CP123L family.

The protein localises to the host membrane. It is found in the virion. This is an uncharacterized protein from African swine fever virus (isolate Warthog/Namibia/Wart80/1980) (ASFV).